A 253-amino-acid polypeptide reads, in one-letter code: tRNA uridine(34) hydroxylase (253 aa).

Residues 127 to 221 (HGRPLVLLDT…YFEDVGGEGY (95 aa)) form the Rhodanese domain. Residue cysteine 181 is the Cysteine persulfide intermediate of the active site.

The protein belongs to the TrhO family.

It carries out the reaction uridine(34) in tRNA + AH2 + O2 = 5-hydroxyuridine(34) in tRNA + A + H2O. In terms of biological role, catalyzes oxygen-dependent 5-hydroxyuridine (ho5U) modification at position 34 in tRNAs. The chain is tRNA uridine(34) hydroxylase from Xanthomonas campestris pv. campestris (strain 8004).